Consider the following 522-residue polypeptide: 5,6-dihydroxyindole-2-carboxylic acid oxidase (522 aa).

A signal peptide spans Met1–Ala21. The Lumenal, melanosome portion of the chain corresponds to Gln22–Thr470. 5 disulfide bridges follow: Cys27–Cys38, Cys39–Cys59, Cys50–Cys89, Cys91–Cys100, and Cys103–Cys112. N-linked (GlcNAc...) asparagine glycans are attached at residues Asn164 and Asn171. Residues His182, His205, and His214 each contribute to the Zn(2+) site. Disulfide bonds link Cys248/Cys251 and Cys280/Cys293. Residue Asn294 is glycosylated (N-linked (GlcNAc...) asparagine). Residues His367 and His371 each coordinate Zn(2+). Asn375 carries N-linked (GlcNAc...) asparagine glycosylation. His394 contacts Zn(2+). The chain crosses the membrane as a helical span at residues Val471–Val491. The Cytoplasmic segment spans residues His492–Val522.

This sequence belongs to the tyrosinase family. Requires Cu(2+) as cofactor. Zn(2+) is required as a cofactor.

It localises to the melanosome membrane. It catalyses the reaction 2 5,6-dihydroxyindole-2-carboxylate + O2 = 2 indole-5,6-quinone-2-carboxylate + 2 H2O. Its pathway is pigment biosynthesis; melanin biosynthesis. In terms of biological role, plays a role in melanin biosynthesis. Catalyzes the oxidation of 5,6-dihydroxyindole-2-carboxylic acid (DHICA) into indole-5,6-quinone-2-carboxylic acid. May regulate or influence the type of melanin synthesized. Also to a lower extent, capable of hydroxylating tyrosine and producing melanin. This is 5,6-dihydroxyindole-2-carboxylic acid oxidase (tyrp1) from Carassius auratus (Goldfish).